Reading from the N-terminus, the 462-residue chain is Proline--tRNA ligase (462 aa).

It belongs to the class-II aminoacyl-tRNA synthetase family. ProS type 3 subfamily. In terms of assembly, homodimer.

It localises to the cytoplasm. The enzyme catalyses tRNA(Pro) + L-proline + ATP = L-prolyl-tRNA(Pro) + AMP + diphosphate. Catalyzes the attachment of proline to tRNA(Pro) in a two-step reaction: proline is first activated by ATP to form Pro-AMP and then transferred to the acceptor end of tRNA(Pro). In Thermoplasma volcanium (strain ATCC 51530 / DSM 4299 / JCM 9571 / NBRC 15438 / GSS1), this protein is Proline--tRNA ligase.